Reading from the N-terminus, the 500-residue chain is Ent-cassadiene C11-alpha-hydroxylase 1 (500 aa).

Residues 4-24 traverse the membrane as a helical segment; it reads SQVWLLWGALSVAVLFYLSTL. Cys442 is a binding site for heme.

It belongs to the cytochrome P450 family. Requires heme as cofactor.

It is found in the membrane. The catalysed reaction is ent-cassa-12,15-diene + reduced [NADPH--hemoprotein reductase] + O2 = ent-11beta-hydroxycassa-12,15-diene + oxidized [NADPH--hemoprotein reductase] + H2O + H(+). Enzyme of the diterpenoid metabolism involved in the biosynthesis of antibacterial oryzalides such as phytocassane. Can use ent-cassadiene as substrate, but not C11-alpha-hydroxy-ent-cassadiene, ent-pimaradiene, ent-sandaracopimaradiene, ent-kaurene, ent-isokaurene, syn-pimaradiene, syn-stemarene, syn-stemodene. The polypeptide is Ent-cassadiene C11-alpha-hydroxylase 1 (Oryza sativa subsp. japonica (Rice)).